A 73-amino-acid polypeptide reads, in one-letter code: Disintegrin lutosin (73 aa).

The Disintegrin domain maps to 1 to 73 (EAGEECDCGS…ADCPRNGLYG (73 aa)). 6 disulfides stabilise this stretch: Cys6–Cys21, Cys8–Cys16, Cys15–Cys38, Cys29–Cys35, Cys34–Cys59, and Cys47–Cys66. The Cell attachment site motif lies at 51 to 53 (RGD).

It belongs to the venom metalloproteinase (M12B) family. P-II subfamily. P-IIa sub-subfamily. In terms of assembly, monomer (disintegrin). In terms of tissue distribution, expressed by the venom gland.

The protein localises to the secreted. Functionally, inhibits fibrinogen interaction with platelets. Acts by binding to alpha-IIb/beta-3 (ITGA2B/ITGB3) on the platelet surface and inhibits aggregation induced by ADP, thrombin, platelet-activating factor and collagen. The polypeptide is Disintegrin lutosin (Crotalus lutosus (Great basin rattlesnake)).